A 71-amino-acid chain; its full sequence is MPQVKLKEGEPVDVAIRRFKRSCEKAGVLADVRKREFYEKPTQERKRKKAAAVKRYQKKLARESVRTTRLY.

This sequence belongs to the bacterial ribosomal protein bS21 family.

In Acinetobacter baylyi (strain ATCC 33305 / BD413 / ADP1), this protein is Small ribosomal subunit protein bS21.